Here is a 287-residue protein sequence, read N- to C-terminus: Large ribosomal subunit protein uL2 (287 aa).

Residues 221–287 (RGSVMNPCDH…SKRSRGGRDS (67 aa)) are disordered. A compositionally biased stretch (basic residues) spans 258–287 (KTRKKNKPSNKLVVRRRRRISKRSRGGRDS).

This sequence belongs to the universal ribosomal protein uL2 family. Part of the 50S ribosomal subunit. Forms a bridge to the 30S subunit in the 70S ribosome.

One of the primary rRNA binding proteins. Required for association of the 30S and 50S subunits to form the 70S ribosome, for tRNA binding and peptide bond formation. It has been suggested to have peptidyltransferase activity; this is somewhat controversial. Makes several contacts with the 16S rRNA in the 70S ribosome. In Prochlorococcus marinus (strain MIT 9312), this protein is Large ribosomal subunit protein uL2.